The chain runs to 127 residues: Large ribosomal subunit protein bL17 (127 aa).

Belongs to the bacterial ribosomal protein bL17 family. In terms of assembly, part of the 50S ribosomal subunit. Contacts protein L32.

In Lactobacillus gasseri (strain ATCC 33323 / DSM 20243 / BCRC 14619 / CIP 102991 / JCM 1131 / KCTC 3163 / NCIMB 11718 / NCTC 13722 / AM63), this protein is Large ribosomal subunit protein bL17.